The chain runs to 483 residues: Auxin transporter-like protein 2 (483 aa).

The Cytoplasmic segment spans residues 1 to 53 (MENGEKAAETVVVGNYVEMEKDGKALDIKSKLSDMFWHGGSAYDAWFSCASNQ). The helical transmembrane segment at 54–71 (VAQVLLTLPYSFSQLGML) threads the bilayer. Residues 72-73 (SG) lie on the Extracellular side of the membrane. Residues 74 to 94 (ILFQLFYGILGSWTAYLISIL) form a helical membrane-spanning segment. At 95–130 (YVEYRTRKEREKVNFRNHVIQWFEVLDGLLGKHWRN) the chain is on the cytoplasmic side. Residues 131-151 (VGLAFNCTFLLFGSVIQLIAC) traverse the membrane as a helical segment. Topologically, residues 152–166 (ASNIYYINDNLDKRT) are extracellular. A helical membrane pass occupies residues 167–187 (WTYIFGACCATTVFIPSFHNY). The Cytoplasmic portion of the chain corresponds to 188 to 190 (RIW). Residues 191–211 (SFLGLLMTTYTAWYLTIASIL) traverse the membrane as a helical segment. The Extracellular portion of the chain corresponds to 212 to 226 (HGQVEGVKHSGPSKL). The chain crosses the membrane as a helical span at residues 227-247 (VLYFTGATNILYTFGGHAVTV). Residues 248–261 (EIMHAMWKPQKFKS) lie on the Cytoplasmic side of the membrane. Residues 262–282 (IYLFATLYVLTLTLPSASAVY) traverse the membrane as a helical segment. The Extracellular portion of the chain corresponds to 283–306 (WAFGDLLLNHSNAFALLPKNLYRD). N-linked (GlcNAc...) asparagine glycosylation is present at Asn291. Residues 307–327 (FAVVLMLIHQFITFGFACTPL) form a helical membrane-spanning segment. Topologically, residues 328-350 (YFVWEKLIGMHECRSMCKRAAAR) are cytoplasmic. A helical transmembrane segment spans residues 351–371 (LPVVIPIWFLAIIFPFFGPIN). Topologically, residues 372–374 (STV) are extracellular. Residues 375 to 395 (GSLLVSFTVYIIPALAHIFTF) form a helical membrane-spanning segment. Residues 396 to 422 (RSSAARENAVEQPPRFLGRWTGAFTIN) are Cytoplasmic-facing. Residues 423-443 (AFIVVWVFIVGFGFGGWASMI) traverse the membrane as a helical segment. The Extracellular portion of the chain corresponds to 444-483 (NFVHQIDTFGLFTKCYQCPPPVMVSPPPISHPHFNHTHGL). Asn478 is a glycosylation site (N-linked (GlcNAc...) asparagine).

The protein belongs to the amino acid/polyamine transporter 2 family. Amino acid/auxin permease (AAAP) (TC 2.A.18.1) subfamily.

It localises to the cell membrane. In terms of biological role, carrier protein involved in proton-driven auxin influx. Mediates the formation of auxin gradient from developing leaves (site of auxin biosynthesis) to tips by contributing to the loading of auxin in vascular tissues and facilitating acropetal (base to tip) auxin transport within inner tissues of the root apex, and basipetal (tip to base) auxin transport within outer tissues of the root apex. In Arabidopsis thaliana (Mouse-ear cress), this protein is Auxin transporter-like protein 2 (LAX2).